We begin with the raw amino-acid sequence, 24 residues long: Myotoxin TmC4-47.2 (24 aa).

A disordered region spans residues 1–24 (KASSSAPKGWTHHGSRFTFHRGSM). Over residues 10–24 (WTHHGSRFTFHRGSM) the composition is skewed to basic residues. Residues 13–24 (HGSRFTFHRGSM) form the C-type lectin domain.

As to expression, expressed by the venom gland.

The protein localises to the secreted. Able to depolarize frog skeletal muscle fibers, but has no effects on squid giant axons. Tetrodotoxin is able to partially antagonize the depolarization. Induces myonecrosis. The chain is Myotoxin TmC4-47.2 from Thalassophryne maculosa (Cano toadfish).